A 532-amino-acid chain; its full sequence is Probable inorganic phosphate transporter 1-9 (532 aa).

At 1-22 the chain is on the cytoplasmic side; that stretch reads MPELSLLSALDAARIQWYHFKA. Residues 23-43 form a helical membrane-spanning segment; it reads IIVAGMGLFTDAYDLFCIAPI. Over 44-62 the chain is Extracellular; that stretch reads MKMISQIYYHKDSIGTALL. Residues 63-83 traverse the membrane as a helical segment; that stretch reads STSYAIALLGTALGQLIFGYL. Residues 84–91 are Cytoplasmic-facing; that stretch reads GDRVGRRK. The chain crosses the membrane as a helical span at residues 92-112; sequence VYGLSLLIMVFSSFGCGFSVC. The Extracellular portion of the chain corresponds to 113 to 124; the sequence is TTRRSCVMVSLG. Residues 125–145 traverse the membrane as a helical segment; that stretch reads FFRFVLGLGIGGDYPLSATIM. Residues 146-154 lie on the Cytoplasmic side of the membrane; it reads SEFANKRTR. The chain crosses the membrane as a helical span at residues 155 to 175; that stretch reads GAFIAAVFSMQGLGILMSSAV. The Extracellular portion of the chain corresponds to 176–207; that stretch reads TMVVCLAFKNAGEGSSEKTNVAGLETLAPPES. A helical membrane pass occupies residues 208–228; that stretch reads DIAWRLILMIGALPAALTFYW. At 229 to 292 the chain is on the cytoplasmic side; sequence RMLMPETARY…KLFSRRFLSL (64 aa). The chain crosses the membrane as a helical span at residues 293 to 313; sequence HGRDLFAASANWFLVDVVFYT. At 314–343 the chain is on the extracellular side; the sequence is SNLLLSQIFNFSNKPLNSTNVYDSAFEVAK. The chain crosses the membrane as a helical span at residues 344 to 364; sequence LAAIVAACSTIPGYWFTVYFI. Over 365–371 the chain is Cytoplasmic; that stretch reads DKIGRVK. Residues 372–392 form a helical membrane-spanning segment; the sequence is IQMMGFFLMAVVYLVAGIPYS. At 393–406 the chain is on the extracellular side; the sequence is WYWSKHEKTNKGFM. A helical transmembrane segment spans residues 407 to 427; that stretch reads VLYGLIFFFSNFGPNTTTFII. Topologically, residues 428-441 are cytoplasmic; the sequence is PAELFPARFRSTCH. Residues 442 to 462 traverse the membrane as a helical segment; that stretch reads GISGAAGKFGAIVGTVGFLWA. Topologically, residues 463–478 are extracellular; sequence TRHHEEDGFPDVKRVR. A helical transmembrane segment spans residues 479-499; the sequence is IAFLILGGVCIAGMIVTYLFT. The Cytoplasmic portion of the chain corresponds to 500–532; it reads RETMGRSLEENEDEIVSTSAGSSPANELLRRQY. The tract at residues 509 to 532 is disordered; sequence ENEDEIVSTSAGSSPANELLRRQY. Polar residues predominate over residues 515–524; it reads VSTSAGSSPA.

The protein belongs to the major facilitator superfamily. Phosphate:H(+) symporter (TC 2.A.1.9) family.

The protein resides in the membrane. Its function is as follows. High-affinity transporter for external inorganic phosphate. This is Probable inorganic phosphate transporter 1-9 (PHT1-9) from Arabidopsis thaliana (Mouse-ear cress).